A 235-amino-acid polypeptide reads, in one-letter code: Probable tetraspanin tspB (235 aa).

The Cytoplasmic segment spans residues 1 to 23 (MVDTTNLIPNTPRYLKVPLIAFN). Residues 24 to 44 (TILWVLGLVLVIIGSIGVSFF) form a helical membrane-spanning segment. Residues 45–68 (SNFKDFTKVSKASAALSNLTTGAP) lie on the Extracellular side of the membrane. Asn-62 is a glycosylation site (N-linked (GlcNAc...) asparagine). A helical transmembrane segment spans residues 69 to 89 (AGVLVIGIFFVILTVIGCFVA). Residues 90 to 93 (GKEK) lie on the Cytoplasmic side of the membrane. Residues 94 to 114 (LVGLVIYTMLMLIILVALIGV) form a helical membrane-spanning segment. The Extracellular segment spans residues 115–200 (GGKALTLHND…ISSNLYLVGA (86 aa)). 2 N-linked (GlcNAc...) asparagine glycosylation sites follow: Asn-143 and Asn-159. Residues 201 to 221 (AAVSIGVIEFICMLFALFLII) traverse the membrane as a helical segment. Residues 222–235 (RICRAPRTKSYDYQ) lie on the Cytoplasmic side of the membrane.

This sequence belongs to the tetraspanin (TM4SF) family.

It localises to the membrane. This Dictyostelium discoideum (Social amoeba) protein is Probable tetraspanin tspB (tspB).